A 504-amino-acid polypeptide reads, in one-letter code: ATP synthase subunit alpha (504 aa).

Position 170 to 177 (170 to 177 (GDRQTGKT)) interacts with ATP.

The protein belongs to the ATPase alpha/beta chains family. F-type ATPases have 2 components, CF(1) - the catalytic core - and CF(0) - the membrane proton channel. CF(1) has five subunits: alpha(3), beta(3), gamma(1), delta(1), epsilon(1). CF(0) has four main subunits: a(1), b(1), b'(1) and c(9-12).

The protein resides in the cellular thylakoid membrane. It carries out the reaction ATP + H2O + 4 H(+)(in) = ADP + phosphate + 5 H(+)(out). Its function is as follows. Produces ATP from ADP in the presence of a proton gradient across the membrane. The alpha chain is a regulatory subunit. The sequence is that of ATP synthase subunit alpha from Prochlorococcus marinus (strain NATL1A).